Consider the following 392-residue polypeptide: Lipid-A-disaccharide synthase (392 aa).

This sequence belongs to the LpxB family.

The enzyme catalyses a lipid X + a UDP-2-N,3-O-bis[(3R)-3-hydroxyacyl]-alpha-D-glucosamine = a lipid A disaccharide + UDP + H(+). It functions in the pathway bacterial outer membrane biogenesis; LPS lipid A biosynthesis. In terms of biological role, condensation of UDP-2,3-diacylglucosamine and 2,3-diacylglucosamine-1-phosphate to form lipid A disaccharide, a precursor of lipid A, a phosphorylated glycolipid that anchors the lipopolysaccharide to the outer membrane of the cell. This Bradyrhizobium diazoefficiens (strain JCM 10833 / BCRC 13528 / IAM 13628 / NBRC 14792 / USDA 110) protein is Lipid-A-disaccharide synthase.